Reading from the N-terminus, the 172-residue chain is Small ribosomal subunit protein uS5 (172 aa).

Residues 13 to 76 (LIEKMVAVNR…DQARRSMIKV (64 aa)) form the S5 DRBM domain.

The protein belongs to the universal ribosomal protein uS5 family. In terms of assembly, part of the 30S ribosomal subunit. Contacts proteins S4 and S8.

Functionally, with S4 and S12 plays an important role in translational accuracy. Located at the back of the 30S subunit body where it stabilizes the conformation of the head with respect to the body. The sequence is that of Small ribosomal subunit protein uS5 from Neisseria gonorrhoeae (strain ATCC 700825 / FA 1090).